The primary structure comprises 72 residues: Large ribosomal subunit protein uL29 (72 aa).

Belongs to the universal ribosomal protein uL29 family.

This is Large ribosomal subunit protein uL29 (rpmC) from Chlamydia muridarum (strain MoPn / Nigg).